A 462-amino-acid polypeptide reads, in one-letter code: SET domain-containing protein SmydA-8, isoform A (462 aa).

Residues 55–287 form the SET domain; it reads PNWTISSSTV…KGGEITTTYT (233 aa).

This sequence belongs to the class V-like SAM-binding methyltransferase superfamily.

This is SET domain-containing protein SmydA-8, isoform A from Drosophila melanogaster (Fruit fly).